We begin with the raw amino-acid sequence, 111 residues long: Probable 4-amino-4-deoxy-L-arabinose-phosphoundecaprenol flippase subunit ArnE (111 aa).

At 1 to 37 (MIWLVLILASLLSVTGQLCQKQATRPVAINKRRKHIA) the chain is on the cytoplasmic side. The chain crosses the membrane as a helical span at residues 38–58 (LWLGLGLVCLGLAMVLWLLVL). One can recognise an EamA domain in the interval 40 to 109 (LGLGLVCLGL…IIGGIVILGS (70 aa)). Over 59–60 (QT) the chain is Periplasmic. The chain crosses the membrane as a helical span at residues 61 to 81 (VPVGIAYPMLSLNFVWVTLAA). Residues 82 to 87 (TKLWHE) are Cytoplasmic-facing. The helical transmembrane segment at 88-108 (PVSFRHWCGVAFIIGGIVILG) threads the bilayer. At 109-111 (STV) the chain is on the periplasmic side.

This sequence belongs to the ArnE family. As to quaternary structure, heterodimer of ArnE and ArnF.

It is found in the cell inner membrane. It participates in bacterial outer membrane biogenesis; lipopolysaccharide biosynthesis. Functionally, translocates 4-amino-4-deoxy-L-arabinose-phosphoundecaprenol (alpha-L-Ara4N-phosphoundecaprenol) from the cytoplasmic to the periplasmic side of the inner membrane. The chain is Probable 4-amino-4-deoxy-L-arabinose-phosphoundecaprenol flippase subunit ArnE from Escherichia fergusonii (strain ATCC 35469 / DSM 13698 / CCUG 18766 / IAM 14443 / JCM 21226 / LMG 7866 / NBRC 102419 / NCTC 12128 / CDC 0568-73).